The sequence spans 522 residues: MLTVPPLIPRLLLALTPLATIAAAFFYFSQTNVLQPTPYIDEIFHIPQTQQYCKGHWNAWDSKITTPPGLYIIGYAWARMLTLTGLSESEACSTLSLRAVNLMAVVIYIPATLYIIQRRVWGSQAHFSAFSLVSFPLIWFYAALYYTDVWSTATVLMALAFALSPRVPFYMVQLSALMCAVSLFFRQTNILWAAVVAVIAIENSHYSNGAPPKNGALAQIFSTISYTFQIELPIFNILISYASVAVGFSFFLYINGGIALGDKDNHVAGNHIPQVFYCALFITTLGFPVWFTWAHLKAYISSSFSVLGLTVRPLFIFVLIPRLLKSYAIEHPFLLADNRHYVFYLWRRLLKPAIYSISVEDVMQSQDAIDPKTLDVISIGLKYALSAAIYFSLWNIWTTLTNSIPAAILVRGRGFNRRNGKSISPAIDLQCLTWPILLAMVFATLASLIPSPLIEPRYYILPYLFWRIYMTPTTAGKRVNTDARFLREWIWYMLINAATVYMFLYKPFEWAHEPGVLQRFMW.

Transmembrane regions (helical) follow at residues isoleucine 8–phenylalanine 28, serine 96–isoleucine 116, alanine 125–tyrosine 145, threonine 152–valine 172, valine 181–isoleucine 201, isoleucine 234–isoleucine 254, valine 275–histidine 295, isoleucine 300–isoleucine 320, alanine 388–valine 410, tryptophan 434–isoleucine 454, and glutamate 488–phenylalanine 508.

This sequence belongs to the ALG10 glucosyltransferase family.

Its subcellular location is the endoplasmic reticulum membrane. It catalyses the reaction an alpha-D-Glc-(1-&gt;3)-alpha-D-Glc-(1-&gt;3)-alpha-D-Man-(1-&gt;2)-alpha-D-Man-(1-&gt;2)-alpha-D-Man-(1-&gt;3)-[alpha-D-Man-(1-&gt;2)-alpha-D-Man-(1-&gt;3)-[alpha-D-Man-(1-&gt;2)-alpha-D-Man-(1-&gt;6)]-alpha-D-Man-(1-&gt;6)]-beta-D-Man-(1-&gt;4)-beta-D-GlcNAc-(1-&gt;4)-alpha-D-GlcNAc-diphospho-di-trans,poly-cis-dolichol + a di-trans,poly-cis-dolichyl beta-D-glucosyl phosphate = a alpha-D-Glc-(1-&gt;2)-alpha-D-Glc-(1-&gt;3)-alpha-D-Glc-(1-&gt;3)-alpha-D-Man-(1-&gt;2)-alpha-D-Man-(1-&gt;2)-alpha-D-Man-(1-&gt;3)-[alpha-D-Man-(1-&gt;2)-alpha-D-Man-(1-&gt;3)-[alpha-D-Man-(1-&gt;2)-alpha-D-Man-(1-&gt;6)]-alpha-D-Man-(1-&gt;6)]-beta-D-Man-(1-&gt;4)-beta-D-GlcNAc-(1-&gt;4)-alpha-D-GlcNAc-diphospho-di-trans,poly-cis-dolichol + a di-trans,poly-cis-dolichyl phosphate + H(+). The protein operates within protein modification; protein glycosylation. In terms of biological role, dol-P-Glc:Glc(2)Man(9)GlcNAc(2)-PP-Dol alpha-1,2-glucosyltransferase that operates in the biosynthetic pathway of dolichol-linked oligosaccharides, the glycan precursors employed in protein asparagine (N)-glycosylation. The assembly of dolichol-linked oligosaccharides begins on the cytosolic side of the endoplasmic reticulum membrane and finishes in its lumen. The sequential addition of sugars to dolichol pyrophosphate produces dolichol-linked oligosaccharides containing fourteen sugars, including two GlcNAcs, nine mannoses and three glucoses. Once assembled, the oligosaccharide is transferred from the lipid to nascent proteins by oligosaccharyltransferases. In the lumen of the endoplasmic reticulum, adds the third and last glucose residue from dolichyl phosphate glucose (Dol-P-Glc) onto the lipid-linked oligosaccharide intermediate Glc(2)Man(9)GlcNAc(2)-PP-Dol to produce Glc(3)Man(9)GlcNAc(2)-PP-Dol. In Yarrowia lipolytica (strain CLIB 122 / E 150) (Yeast), this protein is Dol-P-Glc:Glc(2)Man(9)GlcNAc(2)-PP-Dol alpha-1,2-glucosyltransferase (ALG10).